We begin with the raw amino-acid sequence, 572 residues long: Urease subunit alpha (572 aa).

One can recognise a Urease domain in the interval 133 to 572; sequence GGIDLHVHYI…TSLSQRYFLF (440 aa). Ni(2+) is bound by residues histidine 138, histidine 140, and lysine 221. Position 221 is an N6-carboxylysine (lysine 221). Histidine 223 contributes to the substrate binding site. Ni(2+) contacts are provided by histidine 250 and histidine 276. The active-site Proton donor is histidine 324. Aspartate 364 serves as a coordination point for Ni(2+).

It belongs to the metallo-dependent hydrolases superfamily. Urease alpha subunit family. As to quaternary structure, heterotrimer of UreA (gamma), UreB (beta) and UreC (alpha) subunits. Three heterotrimers associate to form the active enzyme. Requires Ni cation as cofactor. Carboxylation allows a single lysine to coordinate two nickel ions.

The protein localises to the cytoplasm. The enzyme catalyses urea + 2 H2O + H(+) = hydrogencarbonate + 2 NH4(+). It functions in the pathway nitrogen metabolism; urea degradation; CO(2) and NH(3) from urea (urease route): step 1/1. Ureolysis may allow urea to be employed as a nitrogen source for growth and produces ammonia which may protect from killing at low pH. The sequence is that of Urease subunit alpha from Streptococcus salivarius (strain 57.I).